Consider the following 286-residue polypeptide: Beta-lactamase SHV-2 (286 aa).

The N-terminal stretch at 1-21 (MRYIRLCIISLLATLPLAVHA) is a signal peptide. The active-site Acyl-ester intermediate is the S66. C73 and C119 are oxidised to a cystine. The active-site Proton acceptor is the E164. 230–232 (KTG) provides a ligand contact to substrate.

Belongs to the class-A beta-lactamase family.

The enzyme catalyses a beta-lactam + H2O = a substituted beta-amino acid. This enzyme hydrolyzes cefotaxime, ceftazidime and other broad spectrum cephalosporins. The chain is Beta-lactamase SHV-2 (bla) from Escherichia coli.